The chain runs to 277 residues: Shikimate dehydrogenase (NADP(+)) (277 aa).

Shikimate contacts are provided by residues 18–20 and Thr65; that span reads SKS. Lys69 (proton acceptor) is an active-site residue. Glu81 contacts NADP(+). 2 residues coordinate shikimate: Asn90 and Asp106. NADP(+)-binding positions include 130–134, 154–159, and Met217; these read GAGGA and NRTFSK. Position 219 (Tyr219) interacts with shikimate. Gly241 serves as a coordination point for NADP(+).

It belongs to the shikimate dehydrogenase family. In terms of assembly, homodimer.

The catalysed reaction is shikimate + NADP(+) = 3-dehydroshikimate + NADPH + H(+). Its pathway is metabolic intermediate biosynthesis; chorismate biosynthesis; chorismate from D-erythrose 4-phosphate and phosphoenolpyruvate: step 4/7. In terms of biological role, involved in the biosynthesis of the chorismate, which leads to the biosynthesis of aromatic amino acids. Catalyzes the reversible NADPH linked reduction of 3-dehydroshikimate (DHSA) to yield shikimate (SA). The protein is Shikimate dehydrogenase (NADP(+)) of Vibrio vulnificus (strain CMCP6).